Here is a 120-residue protein sequence, read N- to C-terminus: Large ribosomal subunit protein bL20 (120 aa).

Belongs to the bacterial ribosomal protein bL20 family.

Binds directly to 23S ribosomal RNA and is necessary for the in vitro assembly process of the 50S ribosomal subunit. It is not involved in the protein synthesizing functions of that subunit. This Desulforudis audaxviator (strain MP104C) protein is Large ribosomal subunit protein bL20.